Here is a 126-residue protein sequence, read N- to C-terminus: Fluoride-specific ion channel FluC (126 aa).

Transmembrane regions (helical) follow at residues Leu2–Ile22, Val37–Ala57, Leu65–Leu85, and Ala99–Met119. Residues Gly75 and Thr78 each coordinate Na(+).

This sequence belongs to the fluoride channel Fluc/FEX (TC 1.A.43) family.

It is found in the cell inner membrane. The catalysed reaction is fluoride(in) = fluoride(out). Na(+) is not transported, but it plays an essential structural role and its presence is essential for fluoride channel function. Its function is as follows. Fluoride-specific ion channel. Important for reducing fluoride concentration in the cell, thus reducing its toxicity. The protein is Fluoride-specific ion channel FluC of Ruegeria sp. (strain TM1040) (Silicibacter sp.).